An 87-amino-acid polypeptide reads, in one-letter code: Small ribosomal subunit protein bS20 (87 aa).

The tract at residues Met1–Leu28 is disordered.

This sequence belongs to the bacterial ribosomal protein bS20 family.

Functionally, binds directly to 16S ribosomal RNA. In Mycobacterium marinum (strain ATCC BAA-535 / M), this protein is Small ribosomal subunit protein bS20.